Reading from the N-terminus, the 695-residue chain is NADPH--cytochrome P450 reductase (695 aa).

At 1-8 (MAQLDTLD) the chain is on the lumenal side. Residues 9 to 31 (LVVLAVLLVGSVAYFTKGTYWAV) traverse the membrane as a helical segment. At 32 to 695 (AKDPYASTGP…SGSYQEDVWS (664 aa)) the chain is on the cytoplasmic side. In terms of domain architecture, Flavodoxin-like spans 66–221 (CVIFYGSQTG…DFLAWKEPMW (156 aa)). FMN is bound by residues 72-77 (SQTGTA), 123-126 (ATYG), 169-178 (LGNNTYEHYN), and aspartate 204. The FAD-binding FR-type domain occupies 277–538 (HNPFIAPIAE…HVRHSNFKLP (262 aa)). Arginine 296 is a binding site for NADP(+). FAD-binding positions include 451–454 (RYYS), 469–471 (TAV), and 486–489 (GVTT). Residues threonine 552, 614 to 615 (SR), 620 to 624 (KVYVQ), and glutamate 656 each bind NADP(+). Tryptophan 694 serves as a coordination point for FAD.

This sequence belongs to the NADPH--cytochrome P450 reductase family. It in the N-terminal section; belongs to the flavodoxin family. In the C-terminal section; belongs to the flavoprotein pyridine nucleotide cytochrome reductase family. FAD serves as cofactor. It depends on FMN as a cofactor.

The protein localises to the endoplasmic reticulum membrane. The protein resides in the mitochondrion outer membrane. It localises to the cell membrane. The catalysed reaction is 2 oxidized [cytochrome P450] + NADPH = 2 reduced [cytochrome P450] + NADP(+) + H(+). This enzyme is required for electron transfer from NADP to cytochrome P450 in microsomes. It can also provide electron transfer to heme oxygenase and cytochrome B5. Involved in ergosterol biosynthesis. The sequence is that of NADPH--cytochrome P450 reductase from Aspergillus niger (strain ATCC MYA-4892 / CBS 513.88 / FGSC A1513).